The following is a 538-amino-acid chain: Dolichol kinase (538 aa).

The Lumenal portion of the chain corresponds to 1 to 18; it reads MTRECAPPTPGSGAPLSG. The helical transmembrane segment at 19-39 threads the bilayer; it reads SVLAEAAVVFVVVLSIHAAVW. The Cytoplasmic portion of the chain corresponds to 40-74; sequence DRYSWCAVALAVQAFYVQYKWDRLLQQGSAVFQFR. A helical transmembrane segment spans residues 75–95; it reads MSANSGLLPASVVMPLLGLVM. The Lumenal portion of the chain corresponds to 96 to 111; sequence KERCQAAGNPYFERFG. Residues 112-132 form a helical membrane-spanning segment; the sequence is IVVAATGMAVALFSSVLALGI. The Cytoplasmic segment spans residues 133–134; the sequence is TR. A helical membrane pass occupies residues 135-155; the sequence is PVPTNTCVISGLAGGVIIYIM. Over 156–163 the chain is Lumenal; sequence KHSLSVGE. Residues 164–184 traverse the membrane as a helical segment; that stretch reads VIEVLEALLIFVYLNMILLYL. At 185-188 the chain is on the cytoplasmic side; the sequence is LPRC. The chain crosses the membrane as a helical span at residues 189-209; the sequence is FTPGEALLVLGGISFMLNQLI. Residues 210–224 lie on the Lumenal side of the membrane; the sequence is KRSLTVVESQGDPLD. The helical transmembrane segment at 225-245 threads the bilayer; that stretch reads FFLLVVVVGMVLMGIFFSTLF. Residues 246-254 are Cytoplasmic-facing; sequence VFMDSGTWA. Residues 255 to 275 form a helical membrane-spanning segment; sequence SSIFFHLMTCVLGLGVVLPWL. Topologically, residues 276-297 are lumenal; sequence HRLIRRNPLLWLFQFLFQTETR. A helical transmembrane segment spans residues 298–318; that stretch reads VYLLAYWCLLATVACLVVLYQ. The Cytoplasmic segment spans residues 319-337; that stretch reads NAKRSSSESKKHQAPTITR. Residues 338–354 form a helical membrane-spanning segment; that stretch reads KYFHFIVVATYIPGIIL. Residues 355–359 are Lumenal-facing; that stretch reads DRPLL. A helical transmembrane segment spans residues 360–380; it reads YVAATVCLAVFIFLEYVRYFR. Over 381-401 the chain is Cytoplasmic; the sequence is IKPLGHTLRSLLSLFLDERDS. Residues 402–422 form a helical membrane-spanning segment; that stretch reads GPLILTHIYLLLGMSLPIWLV. Over 423 to 436 the chain is Lumenal; that stretch reads PRPCTQKGSLGGAR. Residues 437-457 traverse the membrane as a helical segment; sequence ALVPYAGVLAVGVGDTVASIF. The Cytoplasmic portion of the chain corresponds to 458-472; that stretch reads GSTMGEIRWPGTKKT. Positions 459–474 are CTP-binding; the sequence is STMGEIRWPGTKKTFE. The chain crosses the membrane as a helical span at residues 473-493; the sequence is FEGTMTSIFAQIISVALILIF. The Lumenal segment spans residues 494-495; sequence DS. Residues 496–516 form a helical membrane-spanning segment; it reads GVDLNYSYAWILGSISTVSLL. Residues 517-538 are Cytoplasmic-facing; the sequence is EAYTTQIDNLLLPLYLLILLMA.

This sequence belongs to the polyprenol kinase family.

It localises to the endoplasmic reticulum membrane. It carries out the reaction a di-trans,poly-cis-dolichol + CTP = a di-trans,poly-cis-dolichyl phosphate + CDP + H(+). The protein operates within protein modification; protein glycosylation. In terms of biological role, catalyzes CTP-mediated phosphorylation of dolichol, the terminal step in de novo dolichyl monophosphate (Dol-P) biosynthesis. Dol-P is a lipid carrier essential for the synthesis of N-linked and O-linked oligosaccharides and for GPI anchors. In Bos taurus (Bovine), this protein is Dolichol kinase (DOLK).